The chain runs to 128 residues: Disintegrin gabonin-1 (128 aa).

Residues 1–20 (MIQVLLVIICLAVFPYQGSS) form the signal peptide. Positions 21–47 (IILESGNVNDYEIVYPKKVTVLPTGAM) are excised as a propeptide. The Disintegrin domain occupies 47–112 (MNSAHPCCDP…DCPRNPNKGE (66 aa)). 4 disulfides stabilise this stretch: C53–C76, C67–C73, C72–C97, and C85–C104. The Cell attachment site motif lies at 89 to 91 (RGD). A disordered region spans residues 108–128 (PNKGESDELEWSAAATGSVLM).

This sequence belongs to the disintegrin family. Dimeric disintegrin subfamily. Heterodimer with bitisgabonin (bitisgabonin-1 is the name of the heterodimer); disulfide-linked. As to expression, expressed by the venom gland.

It localises to the secreted. In terms of biological role, the heterodimer bitisgabonin-1 is a potent inhibitor of the adhesion of the RGD-dependent integrin alpha-5/beta-1 (ITGA5/ITGB1) to immobilized fibronectin. The polypeptide is Disintegrin gabonin-1 (Bitis gabonica (Gaboon adder)).